A 274-amino-acid polypeptide reads, in one-letter code: NH(3)-dependent NAD(+) synthetase (274 aa).

46 to 53 (GISGGQDS) contributes to the ATP binding site. Position 52 (aspartate 52) interacts with Mg(2+). Arginine 140 lines the deamido-NAD(+) pocket. Threonine 160 lines the ATP pocket. Glutamate 165 provides a ligand contact to Mg(2+). Residues lysine 173 and aspartate 180 each coordinate deamido-NAD(+). Positions 189 and 211 each coordinate ATP. 260–261 (HK) provides a ligand contact to deamido-NAD(+).

It belongs to the NAD synthetase family. As to quaternary structure, homodimer.

The enzyme catalyses deamido-NAD(+) + NH4(+) + ATP = AMP + diphosphate + NAD(+) + H(+). The protein operates within cofactor biosynthesis; NAD(+) biosynthesis; NAD(+) from deamido-NAD(+) (ammonia route): step 1/1. In terms of biological role, catalyzes the ATP-dependent amidation of deamido-NAD to form NAD. Uses ammonia as a nitrogen source. The protein is NH(3)-dependent NAD(+) synthetase of Pectobacterium carotovorum subsp. carotovorum (strain PC1).